The following is an 815-amino-acid chain: Plakophilin-2 (815 aa).

The segment covering 1-12 (MLKPHPEHKEQP) has biased composition (basic and acidic residues). Disordered stretches follow at residues 1-31 (MLKP…MAEE) and 76-105 (QLTL…ISSS). Positions 13–25 (QDSFTPSGDSTPD) are enriched in polar residues. Over residues 91 to 105 (SSLAESQSSCQISSS) the composition is skewed to low complexity. ARM repeat units lie at residues 317–357 (KGKP…NQCF), 360–399 (PDAK…NIVF), 402–442 (NENK…NLSS), 457–498 (PLTD…NLSS), 501–547 (PDGR…NLSY), 604–644 (PHGV…NLTA), 652–691 (AIAH…NISR), 693–737 (RELH…NLSQ), and 740–783 (ASNT…TLWR).

The protein belongs to the beta-catenin family.

It is found in the nucleus. The protein resides in the cell junction. The protein localises to the desmosome. Its subcellular location is the cytoplasm. Its function is as follows. Required for development of the heart, potentially via cell-cell adhesion and modulation of expression of cardiac precursor genes. Plays a role in desmosome cell-cell junctions and their intracellular connectivity. The polypeptide is Plakophilin-2 (Danio rerio (Zebrafish)).